Here is a 326-residue protein sequence, read N- to C-terminus: MNLSTANHHIPLNDGNSIPIIGLGTYSDPRPVPGKTFIAVKTAIDEGYRHIDGAYVYRNEHEVGEAIREKVAEGKVKREEIFYCGKLWSTDHDPEMVRPALERTLQTLKLDYIDLYIIEMPMAFKPGEEFYPKDENGRVIYHKSNLCATWEALEACKDAGLVKSLGVSNFNRRQLEVILNKPGLKYKPVTNQVECHPYFTQTKLLEVSASSMTSFIVAYSPLGTCRNPLWVNVSSPPLLKDELLTSLGKKYNKTQAQIVLRFDIQRGLVVIPKSTTPERIKENFQIFDFSLTKEEMKDIEALNKNVRFVEMLMWSDHPEYPFHDEY.

Residues 22–26 and Asp-52 each bind NADP(+); that span reads GLGTY. A substrate-binding site is contributed by Tyr-26. Positions 57, 88, 119, and 131 each coordinate substrate. Tyr-57 (proton donor) is an active-site residue. Residues 168-169, Gln-192, and 219-224 each bind NADP(+); these read SN and YSPLGT. A substrate-binding site is contributed by Trp-230. Position 273 to 283 (273 to 283) interacts with NADP(+); sequence KSTTPERIKEN.

The protein belongs to the aldo/keto reductase family. Post-translationally, the N-terminus is blocked.

It localises to the cytoplasm. It carries out the reaction 5beta-cholestan-3-one + NADP(+) = cholest-4-en-3-one + NADPH + H(+). The enzyme catalyses 4,5beta-dihydrocortisone + NADP(+) = cortisone + NADPH + H(+). It catalyses the reaction cortisol + NADPH + H(+) = 5beta-dihydrocortisol + NADP(+). The catalysed reaction is corticosterone + NADPH + H(+) = 5beta-dihydrocorticosterone + NADP(+). It carries out the reaction 7alpha,12alpha-dihydroxycholest-4-en-3-one + NADPH + H(+) = 7alpha,12alpha-dihydroxy-5beta-cholestan-3-one + NADP(+). The enzyme catalyses 7alpha-hydroxycholest-4-en-3-one + NADPH + H(+) = 7alpha-hydroxy-5beta-cholestan-3-one + NADP(+). It catalyses the reaction epitestosterone + NADPH + H(+) = 5beta-dihydroepitestosterone + NADP(+). The catalysed reaction is androst-4-ene-3,17-dione + NADPH + H(+) = 5beta-androstane-3,17-dione + NADP(+). It carries out the reaction progesterone + NADPH + H(+) = 5beta-pregnan-3,20-dione + NADP(+). The enzyme catalyses 21-hydroxyprogesterone + NADPH + H(+) = 5beta-dihydrodeoxycorticosterone + NADP(+). It catalyses the reaction aldosterone + NADPH + H(+) = 5beta-dihydroaldosterone + NADP(+). The catalysed reaction is 17beta-hydroxyandrosta-1,4-dien-3-one + NADPH + H(+) = 17beta-hydroxy-5beta-androst-1-en-3-one + NADP(+). It carries out the reaction 17beta-hydroxyestr-4-en-3-one + NADPH + H(+) = 17beta-hydroxy-5beta-estran-3-one + NADP(+). The enzyme catalyses 5beta-dihydrotestosterone + NADP(+) = testosterone + NADPH + H(+). It catalyses the reaction androst-4-ene-3,11,17-trione + NADPH + H(+) = 17beta-hydroxyandrost-4-ene-3,11-dione + NADP(+). With respect to regulation, subject to inhibition by high substrate concentrations. Inhibited by testosterone concentrations above 10 uM. Inhibited by the primary and secondary bile acids chenodeoxycholic acid and ursodeoxycholic acid. Functionally, catalyzes the stereospecific NADPH-dependent reduction of the C4-C5 double bond of bile acid intermediates and steroid hormones carrying a delta(4)-3-one structure to yield an A/B cis-ring junction. This cis-configuration is crucial for bile acid biosynthesis and plays important roles in steroid metabolism. Capable of reducing a broad range of delta-(4)-3-ketosteroids from C18 (such as, 17beta-hydroxyestr-4-en-3-one) to C27 (such as, 7alpha-hydroxycholest-4-en-3-one). This chain is Aldo-keto reductase family 1 member D1 (Akr1d1), found in Rattus norvegicus (Rat).